A 119-amino-acid chain; its full sequence is Protein FATTY ACID EXPORT 6 (119 aa).

The next 3 helical transmembrane spans lie at 27 to 47, 57 to 77, and 84 to 104; these read SITSFAGGAGTGLLLILAGYI, NSTIAMVLQTVIAAALTLVMG, and GKIMPAGLVAGISALMTCFYV.

This sequence belongs to the TMEM14 family.

The protein resides in the membrane. Functionally, may be involved in free fatty acids export. This chain is Protein FATTY ACID EXPORT 6, found in Arabidopsis thaliana (Mouse-ear cress).